The sequence spans 340 residues: QSMSTLHQEEAFEKADQLSLKKTLEETEAFHKKLNEDHLLHAPEPVIKPGTAYKNQVPINVQAHPGKYIIESRYGVHTLEINDDTRFHSGASTLPPSXYASRFEIHFQPEIQXYRNGVPIDAEXXGAPAIPKYNDYIIITXKQPAVDGGSPILGYFIDVGIGXPSRVSEPVAALDPAEKARLKSRPSAPXTGQIIVTEEEPSEEAGTENXQRVNTELPVKXSNNAGVXEPEETGGAEITGYYVNYREVIDGVPGRXREANIKAISDEAYKXEEXTIAVPGPPHMTFKNRARVVGGLPDVVTIQEGKLLASDEHXNLKYGSEISDFTVSVFIPEEEARSVA.

A disordered region spans residues 177 to 212 (AEKARLKSRPSAPXTGQIIVTEEEPSEEAGTENXQR). Acidic residues predominate over residues 197 to 206 (TEEEPSEEAG).

Homodimer. Interacts with TTN/titin and PNKD. In terms of tissue distribution, seems to be expressed in all cardiac and skeletal fibers.

It localises to the cytoplasm. It is found in the myofibril. The protein resides in the sarcomere. The protein localises to the m line. Major component of the vertebrate myofibrillar M band. Binds myosin, titin, and light meromyosin. This binding is dose dependent. This is Myomesin-1 (MYOM1) from Bos taurus (Bovine).